The sequence spans 966 residues: uncharacterized protein (966 aa).

The first 24 residues, 1–24, serve as a signal peptide directing secretion; sequence MQGNLLKVLGVLAIVATLVCFIFA. The next 6 membrane-spanning stretches (helical) occupy residues 601 to 621, 711 to 731, 743 to 763, 785 to 805, 822 to 842, and 855 to 875; these read IKAI…LGFA, LGLS…IVII, AFMA…FLLF, VVMM…LDFV, FIGT…INWF, and GVNM…YGYV. The segment at 918–966 is disordered; sequence TRQGITGRAEARLKQRNKTLDQAEKNRKNTQKEGGEKTNEEPPKPETPK. A compositionally biased stretch (basic and acidic residues) spans 926-966; it reads AEARLKQRNKTLDQAEKNRKNTQKEGGEKTNEEPPKPETPK.

It belongs to the TrbL/VirB6 family.

It localises to the cell membrane. This is an uncharacterized protein from Rickettsia conorii (strain ATCC VR-613 / Malish 7).